Consider the following 149-residue polypeptide: D-aminoacyl-tRNA deacylase (149 aa).

A Gly-cisPro motif, important for rejection of L-amino acids motif is present at residues 137–138 (GP).

This sequence belongs to the DTD family. In terms of assembly, homodimer.

It is found in the cytoplasm. It catalyses the reaction glycyl-tRNA(Ala) + H2O = tRNA(Ala) + glycine + H(+). The enzyme catalyses a D-aminoacyl-tRNA + H2O = a tRNA + a D-alpha-amino acid + H(+). Functionally, an aminoacyl-tRNA editing enzyme that deacylates mischarged D-aminoacyl-tRNAs. Also deacylates mischarged glycyl-tRNA(Ala), protecting cells against glycine mischarging by AlaRS. Acts via tRNA-based rather than protein-based catalysis; rejects L-amino acids rather than detecting D-amino acids in the active site. By recycling D-aminoacyl-tRNA to D-amino acids and free tRNA molecules, this enzyme counteracts the toxicity associated with the formation of D-aminoacyl-tRNA entities in vivo and helps enforce protein L-homochirality. This is D-aminoacyl-tRNA deacylase from Geobacter sp. (strain M21).